The following is a 154-amino-acid chain: Protein X (154 aa).

Residues 68 to 117 (PCALRFTSARRMETTVNAPWNLPTTLHKRTLGLSPRSTTWIEEYIKDCVF) form a mitochondrial targeting sequence region.

It belongs to the orthohepadnavirus protein X family. May form homodimer. May interact with host CEBPA, CFLAR, CREB1, DDB1, E4F1, HBXIP, HSPD1/HSP60, NFKBIA, POLR2E and SMAD4. Interacts with host SMC5-SMC6 complex and induces its degradation. Interacts with host TRPC4AP; leading to prevent ubiquitination of TRPC4AP. Interacts with host PLSCR1; this interaction promotes ubiquitination and degradation of HBx and impairs HBx-mediated cell proliferation. Post-translationally, a fraction may be phosphorylated in insect cells and HepG2 cells, a human hepatoblastoma cell line. Phosphorylated in vitro by host protein kinase C or mitogen-activated protein kinase. N-acetylated in insect cells.

It localises to the host cytoplasm. It is found in the host nucleus. The protein localises to the host mitochondrion. In terms of biological role, multifunctional protein that plays a role in silencing host antiviral defenses and promoting viral transcription. Does not seem to be essential for HBV infection. May be directly involved in development of cirrhosis and liver cancer (hepatocellular carcinoma). Most of cytosolic activities involve modulation of cytosolic calcium. The effect on apoptosis is controversial depending on the cell types in which the studies have been conducted. May induce apoptosis by localizing in mitochondria and causing loss of mitochondrial membrane potential. May also modulate apoptosis by binding host CFLAR, a key regulator of the death-inducing signaling complex (DISC). Promotes viral transcription by using the host E3 ubiquitin ligase DDB1 to target the SMC5-SMC6 complex to proteasomal degradation. This host complex would otherwise bind to viral episomal DNA, and prevents its transcription. Moderately stimulates transcription of many different viral and cellular transcription elements. Promoters and enhancers stimulated by HBx contain DNA binding sites for NF-kappa-B, AP-1, AP-2, c-EBP, ATF/CREB, or the calcium-activated factor NF-AT. In Homo sapiens (Human), this protein is Protein X.